Consider the following 328-residue polypeptide: MNTVDYLRISLIDRCNFRCQYCMPEGAEIDYILKQDLLTDNELLSLLKEVFIPVGFTRFRLTGGEPLLRPNVIGLIEAIASFPETKDLSMTTNGFLLSKMAKDLYKAGLRRINISLDTLDSDTFNLIIGNKNRSHWQLVWNGIQAAYEVGFDPLKINVVIIPGVNDHEVLDLAALTINRNWHIRFIEFMPIGNDKLFDNKGWISSEELRQIIRKKWGLTESFVPGNGPADIFQIPGAKGTLGFISQMSECFCDRCNRMRLSADGWLRPCLLNEIGQIDLKSSLRNGISVEELRQQVEYLLGLKPEINFKQRESGTTGIYSRTMSQIGG.

The Radical SAM core domain maps to 1 to 229; that stretch reads MNTVDYLRIS…ESFVPGNGPA (229 aa). Position 8 (Arg8) interacts with GTP. Cys15 and Cys19 together coordinate [4Fe-4S] cluster. Residue Tyr21 coordinates S-adenosyl-L-methionine. A [4Fe-4S] cluster-binding site is contributed by Cys22. Arg60 contacts GTP. Position 64 (Gly64) interacts with S-adenosyl-L-methionine. Thr91 serves as a coordination point for GTP. Ser115 contacts S-adenosyl-L-methionine. Lys155 provides a ligand contact to GTP. An S-adenosyl-L-methionine-binding site is contributed by Met189. [4Fe-4S] cluster contacts are provided by Cys252 and Cys255. 257–259 provides a ligand contact to GTP; the sequence is RMR. A [4Fe-4S] cluster-binding site is contributed by Cys269.

Belongs to the radical SAM superfamily. MoaA family. As to quaternary structure, monomer and homodimer. Requires [4Fe-4S] cluster as cofactor.

The catalysed reaction is GTP + AH2 + S-adenosyl-L-methionine = (8S)-3',8-cyclo-7,8-dihydroguanosine 5'-triphosphate + 5'-deoxyadenosine + L-methionine + A + H(+). It functions in the pathway cofactor biosynthesis; molybdopterin biosynthesis. Catalyzes the cyclization of GTP to (8S)-3',8-cyclo-7,8-dihydroguanosine 5'-triphosphate. This is GTP 3',8-cyclase from Trichodesmium erythraeum (strain IMS101).